Here is a 94-residue protein sequence, read N- to C-terminus: Sucrose operon repressor (94 aa).

The 56-residue stretch at 1–56 (MASLHDVARLAGVSKSTVSRVINDEYGVKEATKQKVRQAVAECGYVPNQVAKDLKE) folds into the HTH lacI-type domain. Positions 4–23 (LHDVARLAGVSKSTVSRVIN) form a DNA-binding region, H-T-H motif.

Its function is as follows. Repressor for the scr operon. Binds D-fructose as an inducer. In Vibrio alginolyticus, this protein is Sucrose operon repressor (scrR).